The following is a 1000-amino-acid chain: C2 domain-containing protein 5 (1000 aa).

Residues 1–109 (MPGKLKVKIV…EAATVISGWF (109 aa)) enclose the C2 domain. Residues aspartate 19, aspartate 26, aspartate 76, aspartate 78, serine 81, and aspartate 84 each contribute to the Ca(2+) site. The residue at position 197 (serine 197) is a Phosphoserine; by PKB/AKT2. Phosphoserine occurs at positions 200 and 260. The interval 265–330 (MKEIPFNEDP…SGSAGKEGGP (66 aa)) is disordered. Residues 274–289 (PNPNTHSSGPSTPLKN) show a composition bias toward polar residues. The segment covering 290–318 (QTYSFSPSKSYSRQSSSSDTDLSLTPKTG) has biased composition (low complexity). Phosphoserine is present on residues serine 293, serine 295, serine 304, serine 305, and serine 306. Threonine 317 bears the Phosphothreonine mark. Positions 319–328 (MGSGSAGKEG) are enriched in gly residues. Phosphoserine is present on serine 323. Threonine 601 carries the post-translational modification Phosphothreonine. The segment at 639–669 (EIIGSPIPEPRQRSRLLRSQSESSDEVTELD) is disordered. 5 positions are modified to phosphoserine: serine 643, serine 657, serine 659, serine 661, and serine 662. Threonine 666 is subject to Phosphothreonine. Serine 671 is modified (phosphoserine). Position 807 is a phosphothreonine (threonine 807). 2 positions are modified to phosphoserine: serine 817 and serine 852.

Ca(2+) is required as a cofactor. Post-translationally, phosphorylated on Ser-197 by active myristoylated kinase AKT2; insulin-stimulated phosphorylation by AKT2 regulates SLC2A4/GLUT4 translocation into the plasma membrane.

Its subcellular location is the cytoplasmic vesicle membrane. The protein localises to the cytoplasm. It localises to the cell cortex. It is found in the cell membrane. The protein resides in the cell projection. Its subcellular location is the ruffle. Functionally, required for insulin-stimulated glucose transport and glucose transporter SLC2A4/GLUT4 translocation from intracellular glucose storage vesicle (GSV) to the plasma membrane (PM) in adipocytes. Binds phospholipid membranes in a calcium-dependent manner and is necessary for the optimal membrane fusion between SLC2A4/GLUT4 GSV and the PM. The chain is C2 domain-containing protein 5 (C2CD5) from Homo sapiens (Human).